The primary structure comprises 243 residues: Probable transcriptional regulatory protein BDI_1233 (243 aa).

Belongs to the TACO1 family.

It is found in the cytoplasm. This is Probable transcriptional regulatory protein BDI_1233 from Parabacteroides distasonis (strain ATCC 8503 / DSM 20701 / CIP 104284 / JCM 5825 / NCTC 11152).